A 335-amino-acid chain; its full sequence is Mitochondrial thiamine diphosphate carrier 1 (335 aa).

6 helical membrane passes run 13–29, 88–105, 127–150, 182–199, 231–247, and 304–323; these read KRAVIDASAGGVAGAIS, VPALLMVVPYTSIQFAVL, YLSYISGALAGCAATVGSYPFDLL, LYAGLSPTLIEIIPYAGL, SLSSFQLFLCGLASGTV, and GIVPSTIKAAPAGAVTFVAY. Solcar repeat units follow at residues 13–111, 124–210, and 232–329; these read KRAV…VKSF, LSPY…FKRW, and LSSF…ASDW.

The protein belongs to the mitochondrial carrier (TC 2.A.29) family.

It is found in the mitochondrion inner membrane. Its function is as follows. Mitochondrial transporter that mediates uptake of thiamine diphosphate (ThDP) into mitochondria. This Arabidopsis thaliana (Mouse-ear cress) protein is Mitochondrial thiamine diphosphate carrier 1.